A 125-amino-acid chain; its full sequence is Cholecystokinin-8 (125 aa).

Residues 1–20 form the signal peptide; that stretch reads MYSGICSCLFLAVLSSSSLG. A propeptide spanning residues 21–105 is cleaved from the precursor; it reads QQISGSQHAN…FDPTHRIKDR (85 aa). Tyr107 carries the sulfotyrosine modification. The residue at position 113 (Phe113) is a Phenylalanine amide. Positions 114 to 125 are excised as a propeptide; it reads GRRSAEEYEYSS.

Belongs to the gastrin/cholecystokinin family.

It localises to the secreted. Hypotensive neuropeptide that binds cholecystokinin receptors (CCKAR). The polypeptide is Cholecystokinin-8 (CCK) (Python molurus (Indian python)).